Reading from the N-terminus, the 95-residue chain is Signal recognition particle 19 kDa protein (95 aa).

This sequence belongs to the SRP19 family. Part of the signal recognition particle protein translocation system, which is composed of SRP and FtsY. Archaeal SRP consists of a 7S RNA molecule of 300 nucleotides and two protein subunits: SRP54 and SRP19.

It localises to the cytoplasm. Involved in targeting and insertion of nascent membrane proteins into the cytoplasmic membrane. Binds directly to 7S RNA and mediates binding of the 54 kDa subunit of the SRP. This is Signal recognition particle 19 kDa protein from Pyrobaculum islandicum (strain DSM 4184 / JCM 9189 / GEO3).